A 100-amino-acid chain; its full sequence is Urease subunit gamma (100 aa).

The protein belongs to the urease gamma subunit family. In terms of assembly, heterotrimer of UreA (gamma), UreB (beta) and UreC (alpha) subunits. Three heterotrimers associate to form the active enzyme.

It is found in the cytoplasm. It carries out the reaction urea + 2 H2O + H(+) = hydrogencarbonate + 2 NH4(+). The protein operates within nitrogen metabolism; urea degradation; CO(2) and NH(3) from urea (urease route): step 1/1. The protein is Urease subunit gamma of Magnetococcus marinus (strain ATCC BAA-1437 / JCM 17883 / MC-1).